The primary structure comprises 205 residues: Large ribosomal subunit protein uL18 (205 aa).

The protein belongs to the universal ribosomal protein uL18 family. Part of the 50S ribosomal subunit. Contacts the 5S and 23S rRNAs.

Functionally, this is one of the proteins that bind and probably mediate the attachment of the 5S RNA into the large ribosomal subunit, where it forms part of the central protuberance. This chain is Large ribosomal subunit protein uL18, found in Pyrobaculum arsenaticum (strain DSM 13514 / JCM 11321 / PZ6).